Here is a 236-residue protein sequence, read N- to C-terminus: Small ribosomal subunit protein uS2c (236 aa).

It belongs to the universal ribosomal protein uS2 family.

Its subcellular location is the plastid. It is found in the chloroplast. This chain is Small ribosomal subunit protein uS2c (rps2), found in Chloranthus spicatus (Chulantree).